The chain runs to 147 residues: uncharacterized protein (147 aa).

At 1 to 16 (MDHRAAFGYFSNACFK) the chain is on the extracellular side. A helical membrane pass occupies residues 17 to 37 (VMLFSSLLASFASSVAFISLI). The Cytoplasmic portion of the chain corresponds to 38 to 105 (TFSLSSSESP…FEAAFFLLTN (68 aa)). A helical transmembrane segment spans residues 106-126 (EMIFFILYYFFSCLMFFYVAS). Over 127 to 147 (ERNTNPKILQTINTKPLYIKN) the chain is Extracellular.

The protein localises to the membrane. This is an uncharacterized protein from Saccharomyces cerevisiae (strain ATCC 204508 / S288c) (Baker's yeast).